The primary structure comprises 206 residues: Large ribosomal subunit protein uL4 (206 aa).

It belongs to the universal ribosomal protein uL4 family. As to quaternary structure, part of the 50S ribosomal subunit.

Its function is as follows. One of the primary rRNA binding proteins, this protein initially binds near the 5'-end of the 23S rRNA. It is important during the early stages of 50S assembly. It makes multiple contacts with different domains of the 23S rRNA in the assembled 50S subunit and ribosome. Functionally, forms part of the polypeptide exit tunnel. This chain is Large ribosomal subunit protein uL4, found in Methylobacterium radiotolerans (strain ATCC 27329 / DSM 1819 / JCM 2831 / NBRC 15690 / NCIMB 10815 / 0-1).